Consider the following 710-residue polypeptide: Forkhead box protein P2 (710 aa).

A compositionally biased stretch (polar residues) spans 1–28 (MMQESATETISNSSMNQNGMSTLSSQLD). 2 disordered regions span residues 1–44 (MMQE…SSEV) and 272–334 (HSQE…TGAS). The span at 273–283 (SQEDNGIKHGG) shows a compositional bias: basic and acidic residues. Residues 287–300 (TTNNSSSTTSSTTS) show a composition bias toward low complexity. The segment covering 310–319 (SIVNGQSSVL) has biased composition (polar residues). The span at 321-332 (ARRDSSSHEETG) shows a compositional bias: basic and acidic residues. A C2H2-type zinc finger spans residues 343 to 366 (CKWPGCESICEDFGQFLKHLNNEH). The leucine-zipper stretch occupies residues 383–404 (VQQLEIQLSKERERLQAMMTHL). The CTBP1-binding stretch occupies residues 417 to 421 (PLNLV). Residues 433-454 (TSPQSLPQTPTTPTAPVTPITQ) are compositionally biased toward low complexity. A disordered region spans residues 433–460 (TSPQSLPQTPTTPTAPVTPITQGPSVIT). The fork-head DNA-binding region spans 499-589 (RPPFTYATLI…SQKITGSPTL (91 aa)). Disordered regions lie at residues 644-663 (LDHI…QPHI) and 673-710 (VIAE…EDLE). Residues 694–710 (LEDDREIEEEPLSEDLE) show a composition bias toward acidic residues.

As to quaternary structure, forms homodimers and heterodimers with FOXP1 and FOXP4. Dimerization is required for DNA-binding. Interacts with CTBP1. Interacts with FOXP1. Interacts with TBR1. Interacts with ZMYM2.

It localises to the nucleus. In terms of biological role, transcriptional repressor that may play a role in the specification and differentiation of lung epithelium. May also play a role in developing neural, gastrointestinal and cardiovascular tissues. Can act with CTBP1 to synergistically repress transcription but CTPBP1 is not essential. Plays a role in synapse formation by regulating SRPX2 levels. The protein is Forkhead box protein P2 (Foxp2) of Rattus norvegicus (Rat).